The following is a 71-amino-acid chain: DNA-directed RNA polymerase subunit epsilon (71 aa).

It belongs to the RNA polymerase subunit epsilon family. Monomer. RNAP is composed of a core of 2 alpha, a beta and a beta' subunit. The core is associated with a delta subunit, and at least one of epsilon or omega. When a sigma factor is associated with the core the holoenzyme is formed, which can initiate transcription.

The catalysed reaction is RNA(n) + a ribonucleoside 5'-triphosphate = RNA(n+1) + diphosphate. Its function is as follows. A non-essential component of RNA polymerase (RNAP). Has a similar structure to bacteriophage T7 protein Gp2 (AC P03704), which is known to bind to RNAP in the DNA binding-cleft. Unlike Gp2 however, this protein does not inhibit transcription initiation. In Geobacillus stearothermophilus (strain DSM 13240 / CIP 106956 / 10), this protein is DNA-directed RNA polymerase subunit epsilon.